A 347-amino-acid polypeptide reads, in one-letter code: N-acetyl-gamma-glutamyl-phosphate reductase (347 aa).

The active site involves cysteine 151.

The protein belongs to the NAGSA dehydrogenase family. Type 1 subfamily.

The protein localises to the cytoplasm. The catalysed reaction is N-acetyl-L-glutamate 5-semialdehyde + phosphate + NADP(+) = N-acetyl-L-glutamyl 5-phosphate + NADPH + H(+). The protein operates within amino-acid biosynthesis; L-arginine biosynthesis; N(2)-acetyl-L-ornithine from L-glutamate: step 3/4. Its function is as follows. Catalyzes the NADPH-dependent reduction of N-acetyl-5-glutamyl phosphate to yield N-acetyl-L-glutamate 5-semialdehyde. This chain is N-acetyl-gamma-glutamyl-phosphate reductase, found in Pelotomaculum thermopropionicum (strain DSM 13744 / JCM 10971 / SI).